The chain runs to 431 residues: MKVLIIGSGGREHALAWKVAQDPRVEKVFVAPGNAGTAIEAKCENVAIDVCALEQLADFAEKNVDLTIVGPEAPLVIGVVDLFRSRGLDCFGPTKGAAQLEGSKAFTKDFLARHEIPTADYQNFTEIEPALAYLQEKGAPIVIKADGLAAGKGVIVAMTLEEAEAAVRDMLAGNAFGEAGSRVVIEEFLDGEEASFIVMVDGHNVLPMATSQDHKRVGDQDTGPNTGGMGAYSPAPVVTADVHQRVMDQVIWPTVRGMAEEGNVYTGFLYAGLMIDKAGNPKVIEFNCRFGDPETQPVMLRLESSLVLLVEAAFAKALDKVEAQWDPRPSLGVVLAAGGYPGDYAKGDVINGLDAAAKIEGKVFHAGTALKDGKVTTNGGRVLCATAMGSTVADAQQQAYRLAKEVSWNGSFYRSDIGYRAIARERGEHQQ.

The 208-residue stretch at 108–315 (KDFLARHEIP…LVLLVEAAFA (208 aa)) folds into the ATP-grasp domain. 134-195 (LQEKGAPIVI…EEFLDGEEAS (62 aa)) contributes to the ATP binding site. Residues E285 and N287 each coordinate Mg(2+).

It belongs to the GARS family. Mg(2+) is required as a cofactor. Requires Mn(2+) as cofactor.

The enzyme catalyses 5-phospho-beta-D-ribosylamine + glycine + ATP = N(1)-(5-phospho-beta-D-ribosyl)glycinamide + ADP + phosphate + H(+). It participates in purine metabolism; IMP biosynthesis via de novo pathway; N(1)-(5-phospho-D-ribosyl)glycinamide from 5-phospho-alpha-D-ribose 1-diphosphate: step 2/2. The protein is Phosphoribosylamine--glycine ligase of Pseudomonas putida (strain ATCC 47054 / DSM 6125 / CFBP 8728 / NCIMB 11950 / KT2440).